A 323-amino-acid polypeptide reads, in one-letter code: Putative CRISPR-associated protein SSO1401 (323 aa).

Sometimes seen associated with the aCascade ribonucleoprotein complex, minimally composed of Csa2 and Cas5a, which binds crRNA. Other probable components of aCascade in strain P1 are Cas6 and Csa5, while SSO1399, Cas5b (SSO1400) and SSO1401 have sometimes been seen weakly associated. The Csa2-Cas5a-crRNA complex also binds target DNA homologous to crRNA, probably forming an R-loop. Purified aCascade forms a filament about 6 nm in width.

Functionally, CRISPR (clustered regularly interspaced short palindromic repeat) is an adaptive immune system that provides protection against mobile genetic elements (viruses, transposable elements and conjugative plasmids). CRISPR clusters contain spacers, sequences complementary to antecedent mobile elements, and target invading nucleic acids. CRISPR clusters are transcribed and processed into CRISPR RNA (crRNA). This chain is Putative CRISPR-associated protein SSO1401, found in Saccharolobus solfataricus (strain ATCC 35092 / DSM 1617 / JCM 11322 / P2) (Sulfolobus solfataricus).